A 299-amino-acid polypeptide reads, in one-letter code: Bifunctional protein FolD (299 aa).

Residues Gly168 to Ser170, Ser193, and Ile234 contribute to the NADP(+) site.

The protein belongs to the tetrahydrofolate dehydrogenase/cyclohydrolase family. Homodimer.

The catalysed reaction is (6R)-5,10-methylene-5,6,7,8-tetrahydrofolate + NADP(+) = (6R)-5,10-methenyltetrahydrofolate + NADPH. It catalyses the reaction (6R)-5,10-methenyltetrahydrofolate + H2O = (6R)-10-formyltetrahydrofolate + H(+). The protein operates within one-carbon metabolism; tetrahydrofolate interconversion. Functionally, catalyzes the oxidation of 5,10-methylenetetrahydrofolate to 5,10-methenyltetrahydrofolate and then the hydrolysis of 5,10-methenyltetrahydrofolate to 10-formyltetrahydrofolate. This Bartonella bacilliformis (strain ATCC 35685 / KC583 / Herrer 020/F12,63) protein is Bifunctional protein FolD.